Reading from the N-terminus, the 524-residue chain is 2-isopropylmalate synthase (524 aa).

Positions 12–274 (VIIFDTTLRD…WNRIESKMLT (263 aa)) constitute a Pyruvate carboxyltransferase domain. Mn(2+) contacts are provided by aspartate 21, histidine 209, histidine 211, and asparagine 245. The tract at residues 398–524 (RLKSLTVIAG…QDAPAVAVAG (127 aa)) is regulatory domain.

Belongs to the alpha-IPM synthase/homocitrate synthase family. LeuA type 1 subfamily. In terms of assembly, homodimer. Mn(2+) serves as cofactor.

The protein resides in the cytoplasm. The enzyme catalyses 3-methyl-2-oxobutanoate + acetyl-CoA + H2O = (2S)-2-isopropylmalate + CoA + H(+). It participates in amino-acid biosynthesis; L-leucine biosynthesis; L-leucine from 3-methyl-2-oxobutanoate: step 1/4. Catalyzes the condensation of the acetyl group of acetyl-CoA with 3-methyl-2-oxobutanoate (2-ketoisovalerate) to form 3-carboxy-3-hydroxy-4-methylpentanoate (2-isopropylmalate). In Rhodopseudomonas palustris (strain BisB5), this protein is 2-isopropylmalate synthase.